Reading from the N-terminus, the 670-residue chain is Solute carrier organic anion transporter family member 1A4 (670 aa).

Residues 1-20 lie on the Cytoplasmic side of the membrane; it reads MGKSEKEVATHGVRCFSKIK. Residues 21-40 traverse the membrane as a helical segment; that stretch reads AFLLALTCAYVSKSLSGTYM. Residues 41–59 lie on the Extracellular side of the membrane; sequence NSMLTQIERQFGIPTSVVG. The helical transmembrane segment at 60 to 80 threads the bilayer; sequence LINGSFEIGNLLLIIFVSYFG. Topologically, residues 81 to 86 are cytoplasmic; that stretch reads TKLHRP. The helical transmembrane segment at 87 to 111 threads the bilayer; that stretch reads IMIGVGCAVMGLGCFLISIPHFLMG. Residues 112–155 lie on the Extracellular side of the membrane; sequence RYEYETTILPTSNLSSNSFVCTENRTQTLKPTQDPTECVKEMKS. 2 N-linked (GlcNAc...) asparagine glycosylation sites follow: Asn124 and Asn135. A helical transmembrane segment spans residues 156–184; sequence LMWIYVLVGNIIRGMGETPIMPLGISYIE. Over 185-203 the chain is Cytoplasmic; sequence DFAKSENSPLYIGILETGM. A helical membrane pass occupies residues 204 to 224; that stretch reads TIGPLIGLLLGSSCANIYVDT. Residues 225-242 lie on the Extracellular side of the membrane; it reads GSVNTDDLTITPTDTRWV. Residues 243–267 form a helical membrane-spanning segment; that stretch reads GAWWIGFLVCAGVNILTSIPFFFFP. Residues 268-311 lie on the Cytoplasmic side of the membrane; sequence KTLLKEGLQDNGDGTENAKEEKHREKIKEENRGITKDFFLFMKS. A helical membrane pass occupies residues 312 to 333; that stretch reads LSCNPIYMIFILISVIQVNAFI. Over 334–353 the chain is Extracellular; sequence NSFTFMPKYLEQQYGKSTAE. The chain crosses the membrane as a helical span at residues 354-377; it reads IVFLMGLYMLPPICLGYLIGGLIM. The Cytoplasmic segment spans residues 378–381; that stretch reads KKFK. The helical transmembrane segment at 382–405 threads the bilayer; sequence ITVKKAAYIGFWLSLTEYLLSFVS. Residues 406-513 lie on the Extracellular side of the membrane; it reads YIMTCDNFPV…PECANKLQYF (108 aa). A Kazal-like domain is found at 433–488; that stretch reads NNVLADCNTKCSCLTNTWDPVCGDNGLSYMSACLAGCEKSVGTGTNMVFQNCSCIQ. Disulfide bonds link Cys439/Cys469, Cys445/Cys465, and Cys454/Cys486. N-linked (GlcNAc...) asparagine glycosylation is found at Asn483 and Asn492. Residues 514–536 traverse the membrane as a helical segment; that stretch reads LIISIIGCFIFSLGAIPGYMVLL. Residues 537-545 lie on the Cytoplasmic side of the membrane; sequence RCMKSEEKS. The helical transmembrane segment at 546-571 threads the bilayer; that stretch reads LGVGLHTFCMRILGGIPAPIYFGALI. The Extracellular portion of the chain corresponds to 572 to 605; the sequence is DRTCLHWGTLKCGEPGACRMYDINSFRRIYLGLP. A helical membrane pass occupies residues 606 to 623; sequence AALRGASFLPALFILILM. The Cytoplasmic segment spans residues 624 to 670; sequence RKFQFPGDIDSSDTDPAEMKLTAKESKCTNVHRSPTMQNDGERKTKL. 2 positions are modified to phosphoserine: Ser634 and Ser635. A disordered region spans residues 649–670; the sequence is SKCTNVHRSPTMQNDGERKTKL. Over residues 651 to 662 the composition is skewed to polar residues; sequence CTNVHRSPTMQN.

This sequence belongs to the organo anion transporter (TC 2.A.60) family. In terms of tissue distribution, highly expressed in brain and liver. Detected at very low levels in heart and lung.

It is found in the cell membrane. It carries out the reaction estrone 3-sulfate(out) = estrone 3-sulfate(in). The catalysed reaction is taurocholate(out) = taurocholate(in). It catalyses the reaction prostaglandin E2(out) = prostaglandin E2(in). The enzyme catalyses L-thyroxine(out) = L-thyroxine(in). Mediates the Na(+)-independent transport of organic anions such as taurocholate, cholate, 17-beta-glucuronosyl estradiol, prostaglandin E2, estrone 3-sulfate, L-thyroxine (T4), the cardiac glycosides ouabain and digoxin and thyroid hormones. Shows a pH-sensitive substrate specificity which may be ascribed to the protonation state of the binding site and leads to a stimulation of substrate transport in an acidic microenvironment. Hydrogencarbonate/HCO3(-) acts as the probable counteranion that exchanges for organic anions. The polypeptide is Solute carrier organic anion transporter family member 1A4 (Slco1a4) (Mus musculus (Mouse)).